A 1902-amino-acid polypeptide reads, in one-letter code: MNKLTEQHLLKKSRFLKYSLLASISVGAAIPFEGMAMSKEAFRIDLSNKLLNHVSQLNGYKDTTNNTPQQIGKVIVSEPKINTYTPSEIREMKISNKPKASNPLKDVPIEDHYKVVARSKSDVGTARKVRPITRCKTFAGIEKTEQSQNTYTPESTEQMPQKPEIIITASSPTVSPASNSFITAPNTPNTTLTSPEHYTTAPGTPSSTPATPYQSTSDSKPNDSLGANTPPNINTNSKAVRRLSFSSSGPQQQAVQSSSQVKSEVPPKPTFVPLPIKKSSTEIVAGMVSNISRVNEMIGIKLAEVTQAIDTTDKKDKERLQKLYTQLTSTQKTTEKLKSRAEEIETKIKIGENKDKIKKLEKELTSKNNKADRLFQKIEKIDIPANKVSIKSQETVPVTTASTEVSAFQAQQARINEARQGVFNKNKSSGGNARKSSAGTKREKKKQEAQKQLSEIKKQEKAIKTASDKAKEVAASAKKETSRTALRAMQDKMNGDSEQLNKIEENLKLLTPVVYNSSTGPTYKQSPKATPTIPLSHGVQRILGEQPEDEEGYLVPIKVQQQPYQEIEDPIPSHSKDIYEAKVSQYINYLNSIQPNQSNQAQIDSVIDGLATEMRKFSADQFSQKLGEIAHLASIKAYEGLFEKLYEIQQARILETQKVYEQAEISQSYAEYEENSRKSSIPVLSRSSSAKSVISSNFEEKSALLQTTTTDESLRSDNNWKNSAPYSSSPKLDKRGLEYLDLAGDAFVQNLKQPDTLTIETLGLITPTQNTTVAKSDSSRKNNVSGSISEIQQLQSEKMRTETLGVQDDLGLDLHYTPQETLTEKSTYLVSSKKKQGNIIKRAVSKVGSILQTNYAENRRRKRDGETSKQRTVDQEGEFGHAWGNENHKESSLSVVSGCIKKATQLISLLDAKRTAILQTTSPSQRRSVSLVLQEIENDYREAIKISQKLQQVLIRKPEDIKAYNAKAEKKLDAIKSRADKHFNNIETDVDVGFNPNGGNSHSMPTANMDILPKNLAVTPPTNVGSLYNSPQAQQFQEDHKNIIINDRSQGRLNLVDSTIVRELTDVDASIYNTAPPEVLKEAEALLDRSQGRLNLVDNTIKKGTQPLSNLSTIYESVSYENLASETIYKTEQPKPSISYTNTSKRKLPIPLFRSAELDKKLEYLDLEDKLLEVEEARIVKEKEAIAKLNQYQDPENLEFKRLAMEALDLSSKESQLKQKRKAIEAEFSLNEKSSSTDVSILRSYSIDDISGVLSDAESNLSRSPSVSGLEDLNNSNVMQLEELKSKHEKIANDYNKELELDTLNKEKIWLEGEIKHLDTEFKPKVTESKPVFSCSSSVGSINSFSNDDDLSSRDVVTPVDTLNIEINKDYVDTYIRVLSNKIQKIEEIQKIEELSGSSSRSEELNHIKEAMAYISNRIQDVEELDEKMLLAINAQLQEHDEKISSLLREEATDILAQLLLQEMLVSDGKSESTLPAGDEEQEDTEVSRQLSSLPALASSNESALALSDDREKECLALGDSSEDEESYDSGFEEEEETIGQLSDSDGDNLKITEVDTVIPLEQEAKKEMQTQISENAPTLNQAKVVNTIVNNMIRNRLDASMNMSNNMVAVGAGDEEESHIKRGLWMRGMYGTNNHGRVENMTGYRGTNKGATIGFDAEIDNNIVGIAYSNVHSVFKFKNSKNNDKELINSHVVSIYGQKELPKNFALQALVSASKNFIKDKTTYSYGDTKIKSNVKHRNHSYNAEALLHYNYLLQSKLVITPNIGLRYGKSRDGVYNETGVNVQEIALTMKENNILSGIVGTKVTVPLKDALKFNNLGLIFQGAVEHNFKEKTQRINRVVKIFDNTFKHNYLIPKQPKTSYNLGTGIIGSIKNTTISLDYNYYLNKHYRSHQGSVKLKVNL.

The first 28 residues, 1-28, serve as a signal peptide directing secretion; that stretch reads MNKLTEQHLLKKSRFLKYSLLASISVGA. Disordered regions lie at residues 140-273, 420-485, 707-729, 858-885, and 1470-1548; these read GIEK…TFVP, QGVF…SRTA, TTTT…YSSS, NRRR…AWGN, and KSES…SDGD. Composition is skewed to polar residues over residues 146-159 and 168-197; these read QSQN…TEQM and TASS…SPEH. The segment covering 199 to 212 has biased composition (low complexity); it reads TTAPGTPSSTPATP. Residues 225–238 are compositionally biased toward polar residues; it reads LGANTPPNINTNSK. A compositionally biased stretch (low complexity) spans 246–264; the sequence is SSSGPQQQAVQSSSQVKSE. Residues 423-439 are compositionally biased toward polar residues; sequence FNKNKSSGGNARKSSAG. Positions 445–482 are enriched in basic and acidic residues; that stretch reads KKQEAQKQLSEIKKQEKAIKTASDKAKEVAASAKKETS. The segment covering 863 to 874 has biased composition (basic and acidic residues); it reads RDGETSKQRTVD. The span at 1491–1507 shows a compositional bias: low complexity; the sequence is LSSLPALASSNESALAL. Residues 1521 to 1538 show a composition bias toward acidic residues; that stretch reads SSEDEESYDSGFEEEEET. Residues 1618-1902 enclose the Autotransporter domain; sequence ESHIKRGLWM…QGSVKLKVNL (285 aa).

The protein resides in the cell outer membrane. The chain is Putative surface cell antigen sca1 (sca1) from Rickettsia conorii (strain ATCC VR-613 / Malish 7).